A 210-amino-acid polypeptide reads, in one-letter code: Potassium-transporting ATPase KdpC subunit (210 aa).

A helical membrane pass occupies residues 13 to 33 (LVTLVLLLVCGLAYPLILTGI).

It belongs to the KdpC family. The system is composed of three essential subunits: KdpA, KdpB and KdpC.

It localises to the cell membrane. Part of the high-affinity ATP-driven potassium transport (or Kdp) system, which catalyzes the hydrolysis of ATP coupled with the electrogenic transport of potassium into the cytoplasm. This subunit acts as a catalytic chaperone that increases the ATP-binding affinity of the ATP-hydrolyzing subunit KdpB by the formation of a transient KdpB/KdpC/ATP ternary complex. This Clostridium kluyveri (strain ATCC 8527 / DSM 555 / NBRC 12016 / NCIMB 10680 / K1) protein is Potassium-transporting ATPase KdpC subunit.